The following is a 624-amino-acid chain: Chaperone protein HtpG (624 aa).

An a; substrate-binding region spans residues 1 to 336; the sequence is MKGQETRGFQ…SNDLPLNVSR (336 aa). The segment at 337 to 552 is b; that stretch reads EILQDSTVTR…ADEMSTQMAK (216 aa). The c stretch occupies residues 553–624; that stretch reads LFAAAGQSVP…IRRMNQLLVS (72 aa).

The protein belongs to the heat shock protein 90 family. As to quaternary structure, homodimer.

Its subcellular location is the cytoplasm. Its function is as follows. Molecular chaperone. Has ATPase activity. The chain is Chaperone protein HtpG from Salmonella paratyphi B (strain ATCC BAA-1250 / SPB7).